The following is a 299-amino-acid chain: Release factor glutamine methyltransferase (299 aa).

S-adenosyl-L-methionine is bound by residues 134–138, D157, W186, and N203; that span reads GTGSG. 203–206 lines the substrate pocket; that stretch reads NPPY.

It belongs to the protein N5-glutamine methyltransferase family. PrmC subfamily.

The enzyme catalyses L-glutaminyl-[peptide chain release factor] + S-adenosyl-L-methionine = N(5)-methyl-L-glutaminyl-[peptide chain release factor] + S-adenosyl-L-homocysteine + H(+). In terms of biological role, methylates the class 1 translation termination release factors RF1/PrfA and RF2/PrfB on the glutamine residue of the universally conserved GGQ motif. The chain is Release factor glutamine methyltransferase from Synechocystis sp. (strain ATCC 27184 / PCC 6803 / Kazusa).